Consider the following 258-residue polypeptide: Malonyl-[acyl-carrier protein] O-methyltransferase (258 aa).

Belongs to the methyltransferase superfamily.

It catalyses the reaction malonyl-[ACP] + S-adenosyl-L-methionine = malonyl-[ACP] methyl ester + S-adenosyl-L-homocysteine. It functions in the pathway cofactor biosynthesis; biotin biosynthesis. Converts the free carboxyl group of a malonyl-thioester to its methyl ester by transfer of a methyl group from S-adenosyl-L-methionine (SAM). It allows to synthesize pimeloyl-ACP via the fatty acid synthetic pathway. In Haemophilus ducreyi (strain 35000HP / ATCC 700724), this protein is Malonyl-[acyl-carrier protein] O-methyltransferase.